We begin with the raw amino-acid sequence, 251 residues long: Sugar fermentation stimulation protein homolog (251 aa).

Belongs to the SfsA family.

The polypeptide is Sugar fermentation stimulation protein homolog (Prochlorococcus marinus (strain MIT 9313)).